Consider the following 157-residue polypeptide: UPF0756 membrane protein BH3161 (157 aa).

4 helical membrane-spanning segments follow: residues 1-21 (MISQ…LAKN), 54-74 (LGVT…EIGF), 87-107 (WVAL…IDLL), and 117-137 (LVLG…GPLI).

It belongs to the UPF0756 family.

It localises to the cell membrane. This chain is UPF0756 membrane protein BH3161, found in Halalkalibacterium halodurans (strain ATCC BAA-125 / DSM 18197 / FERM 7344 / JCM 9153 / C-125) (Bacillus halodurans).